The primary structure comprises 534 residues: Probable alanine aminotransferase, mitochondrial (534 aa).

A mitochondrion-targeting transit peptide spans 1–18 (MFKRSLKVLLSNPPINRV). Lys-352 bears the N6-(pyridoxal phosphate)lysine mark.

This sequence belongs to the class-I pyridoxal-phosphate-dependent aminotransferase family. Alanine aminotransferase subfamily. As to quaternary structure, homodimer. Requires pyridoxal 5'-phosphate as cofactor.

Its subcellular location is the mitochondrion matrix. It carries out the reaction L-alanine + 2-oxoglutarate = pyruvate + L-glutamate. Its pathway is amino-acid degradation; L-alanine degradation via transaminase pathway; pyruvate from L-alanine: step 1/1. This Dictyostelium discoideum (Social amoeba) protein is Probable alanine aminotransferase, mitochondrial (gpt).